Reading from the N-terminus, the 250-residue chain is Putative endonuclease (250 aa).

Putative endonuclease. In Escherichia coli (Enterobacteria phage T5), this protein is Putative endonuclease.